The primary structure comprises 148 residues: Deoxyuridine 5'-triphosphate nucleotidohydrolase (148 aa).

Residues 65–67 (RSG), asparagine 78, 82–84 (TID), and lysine 92 each bind substrate.

Belongs to the dUTPase family. Mg(2+) serves as cofactor.

It catalyses the reaction dUTP + H2O = dUMP + diphosphate + H(+). It participates in pyrimidine metabolism; dUMP biosynthesis; dUMP from dCTP (dUTP route): step 2/2. Functionally, this enzyme is involved in nucleotide metabolism: it produces dUMP, the immediate precursor of thymidine nucleotides and it decreases the intracellular concentration of dUTP so that uracil cannot be incorporated into DNA. The protein is Deoxyuridine 5'-triphosphate nucleotidohydrolase of Chlorobium luteolum (strain DSM 273 / BCRC 81028 / 2530) (Pelodictyon luteolum).